Here is a 134-residue protein sequence, read N- to C-terminus: DNA-binding protein inhibitor ID-2 (134 aa).

A phosphoserine mark is found at S14 and S25. The region spanning 23–75 (SRSKTPVDDPMSLLYNMNDCYSKLKELVPSIPQNKKVSKMEILQHVIDYILDL) is the bHLH domain. The Nuclear export signal signature appears at 106-115 (LNTDISILSL).

As to quaternary structure, interacts with GATA4 and NKX2-5. Interacts with NR0B2. Interacts with CLOCK and BMAL1. Interacts with IFI204. Interacts with NEDD9/HEF1. Interacts with ASB4; this interaction promotes ID2 proteasomal degradation. Ubiquitinated in a ASB4-depedent manner, leading to proteasomal degradation. In terms of processing, phosphorylated in vitro by CDK1, PKA and PKC.

The protein localises to the cytoplasm. It localises to the nucleus. In terms of biological role, transcriptional regulator (lacking a basic DNA binding domain) which negatively regulates the basic helix-loop-helix (bHLH) transcription factors by forming heterodimers and inhibiting their DNA binding and transcriptional activity. Implicated in regulating a variety of cellular processes, including cellular growth, senescence, differentiation, apoptosis, angiogenesis, and neoplastic transformation. Inhibits skeletal muscle and cardiac myocyte differentiation. Regulates the circadian clock by repressing the transcriptional activator activity of the CLOCK-BMAL1 heterodimer. Restricts the CLOCK and BMAL1 localization to the cytoplasm. Plays a role in both the input and output pathways of the circadian clock: in the input component, is involved in modulating the magnitude of photic entrainment and in the output component, contributes to the regulation of a variety of liver clock-controlled genes involved in lipid metabolism. This chain is DNA-binding protein inhibitor ID-2 (ID2), found in Sus scrofa (Pig).